The sequence spans 523 residues: NADH-ubiquinone oxidoreductase chain 2 (523 aa).

The next 14 membrane-spanning stretches (helical) occupy residues 3–23, 30–50, 62–82, 110–130, 135–155, 170–190, 212–232, 246–266, 281–301, 306–326, 333–353, 386–406, 419–439, and 490–510; these read LFGVLTMILAIALFSLRIPAI, IILLLFSALLSYNSLYMNNIG, VTTITQSIDVFIYLLGALVLL, SVLAEYPLIALFSVLGMSSLI, LISMFLSIELQSFAVYILATI, FLLGSLSSALILLGSSLLYSF, IEISVLLIMVGLLFKVSAAPF, VVTTWLTTMPKIAFLVFILEF, LLLISSLLSLLIGTIGGLAQY, LLTYSTISHVGFLLLALAINN, FLFYLIQYSLTNINVFFILVA, GLSLAICLFSMAGIPPLVGFF, GNFFLAFVAILVSVVSAAYYL, and LVIATITLLLIFFIINPTPLL.

It belongs to the complex I subunit 2 family.

It localises to the mitochondrion inner membrane. The enzyme catalyses a ubiquinone + NADH + 5 H(+)(in) = a ubiquinol + NAD(+) + 4 H(+)(out). In terms of biological role, core subunit of the mitochondrial membrane respiratory chain NADH dehydrogenase (Complex I) that is believed to belong to the minimal assembly required for catalysis. Complex I functions in the transfer of electrons from NADH to the respiratory chain. The immediate electron acceptor for the enzyme is believed to be ubiquinone. This chain is NADH-ubiquinone oxidoreductase chain 2, found in Rhizopus oryzae (Mucormycosis agent).